The following is a 491-amino-acid chain: 3-octaprenyl-4-hydroxybenzoate carboxy-lyase (491 aa).

Asparagine 176 contacts Mn(2+). Prenylated FMN contacts are provided by residues 179–181, 193–195, and 198–199; these read IYR, RWL, and RG. A Mn(2+)-binding site is contributed by glutamate 242. Catalysis depends on aspartate 291, which acts as the Proton donor.

Belongs to the UbiD family. In terms of assembly, homohexamer. The cofactor is prenylated FMN. Mn(2+) serves as cofactor.

Its subcellular location is the cell membrane. The catalysed reaction is a 4-hydroxy-3-(all-trans-polyprenyl)benzoate + H(+) = a 2-(all-trans-polyprenyl)phenol + CO2. It functions in the pathway cofactor biosynthesis; ubiquinone biosynthesis. Functionally, catalyzes the decarboxylation of 3-octaprenyl-4-hydroxy benzoate to 2-octaprenylphenol, an intermediate step in ubiquinone biosynthesis. The chain is 3-octaprenyl-4-hydroxybenzoate carboxy-lyase from Chromobacterium violaceum (strain ATCC 12472 / DSM 30191 / JCM 1249 / CCUG 213 / NBRC 12614 / NCIMB 9131 / NCTC 9757 / MK).